Reading from the N-terminus, the 231-residue chain is MADITIGVVVFPGSNCDHDTMHAVASFEGVKPVMLWHGSHDLQGAKAIILPGGFSYGDYLRAGSIARFSPIMQEVVDAAGKGLPVLGICNGFQVLLESGLLDGALSRNRDKKFLCRDTYIRPVNSNTMFTGLYREDEVLSIPIAHGEGNYFAPPEVIESLEEHDQVVFRYTDREGHVSDEANPNGSVGNIAGIMNRNGNVLGLMPHPERASEKLLGSEDGRRLFASLFRQL.

The 225-residue stretch at 7 to 231 (GVVVFPGSNC…RLFASLFRQL (225 aa)) folds into the Glutamine amidotransferase type-1 domain. C89 acts as the Nucleophile in catalysis. Catalysis depends on residues H206 and E208.

In terms of assembly, part of the FGAM synthase complex composed of 1 PurL, 1 PurQ and 2 PurS subunits.

The protein resides in the cytoplasm. It carries out the reaction N(2)-formyl-N(1)-(5-phospho-beta-D-ribosyl)glycinamide + L-glutamine + ATP + H2O = 2-formamido-N(1)-(5-O-phospho-beta-D-ribosyl)acetamidine + L-glutamate + ADP + phosphate + H(+). The catalysed reaction is L-glutamine + H2O = L-glutamate + NH4(+). It functions in the pathway purine metabolism; IMP biosynthesis via de novo pathway; 5-amino-1-(5-phospho-D-ribosyl)imidazole from N(2)-formyl-N(1)-(5-phospho-D-ribosyl)glycinamide: step 1/2. Functionally, part of the phosphoribosylformylglycinamidine synthase complex involved in the purines biosynthetic pathway. Catalyzes the ATP-dependent conversion of formylglycinamide ribonucleotide (FGAR) and glutamine to yield formylglycinamidine ribonucleotide (FGAM) and glutamate. The FGAM synthase complex is composed of three subunits. PurQ produces an ammonia molecule by converting glutamine to glutamate. PurL transfers the ammonia molecule to FGAR to form FGAM in an ATP-dependent manner. PurS interacts with PurQ and PurL and is thought to assist in the transfer of the ammonia molecule from PurQ to PurL. The protein is Phosphoribosylformylglycinamidine synthase subunit PurQ of Chlorobium luteolum (strain DSM 273 / BCRC 81028 / 2530) (Pelodictyon luteolum).